The sequence spans 376 residues: Lipid-A-disaccharide synthase (376 aa).

Belongs to the LpxB family.

The enzyme catalyses a lipid X + a UDP-2-N,3-O-bis[(3R)-3-hydroxyacyl]-alpha-D-glucosamine = a lipid A disaccharide + UDP + H(+). The protein operates within bacterial outer membrane biogenesis; LPS lipid A biosynthesis. Its function is as follows. Condensation of UDP-2,3-diacylglucosamine and 2,3-diacylglucosamine-1-phosphate to form lipid A disaccharide, a precursor of lipid A, a phosphorylated glycolipid that anchors the lipopolysaccharide to the outer membrane of the cell. The sequence is that of Lipid-A-disaccharide synthase from Coxiella burnetii (strain RSA 331 / Henzerling II).